The chain runs to 74 residues: UPF0435 protein ABC2298 (74 aa).

The protein belongs to the UPF0435 family.

This chain is UPF0435 protein ABC2298, found in Shouchella clausii (strain KSM-K16) (Alkalihalobacillus clausii).